We begin with the raw amino-acid sequence, 241 residues long: Carboxy-S-adenosyl-L-methionine synthase (241 aa).

Residues Tyr-38, 63-65, 88-89, 116-117, Asn-131, and Arg-198 contribute to the S-adenosyl-L-methionine site; these read GCS, DN, and DI.

The protein belongs to the class I-like SAM-binding methyltransferase superfamily. Cx-SAM synthase family. As to quaternary structure, homodimer.

It carries out the reaction prephenate + S-adenosyl-L-methionine = carboxy-S-adenosyl-L-methionine + 3-phenylpyruvate + H2O. Its function is as follows. Catalyzes the conversion of S-adenosyl-L-methionine (SAM) to carboxy-S-adenosyl-L-methionine (Cx-SAM). The sequence is that of Carboxy-S-adenosyl-L-methionine synthase from Haemophilus influenzae (strain PittEE).